The following is a 374-amino-acid chain: uncharacterized protein (374 aa).

Positions 182 to 201 (PALGESPQGQKSSASSDKAV) are disordered. Residues 188–197 (PQGQKSSASS) are compositionally biased toward polar residues.

This is an uncharacterized protein from Rattus norvegicus (Rat).